The following is a 297-amino-acid chain: N-acetylneuraminate lyase (297 aa).

Residues serine 47 and threonine 48 each contribute to the aceneuramate site. Tyrosine 137 acts as the Proton donor in catalysis. Residue lysine 165 is the Schiff-base intermediate with substrate of the active site. Positions 167, 189, 191, 192, and 208 each coordinate aceneuramate.

This sequence belongs to the DapA family. NanA subfamily. In terms of assembly, homotetramer.

The protein localises to the cytoplasm. It carries out the reaction aceneuramate = aldehydo-N-acetyl-D-mannosamine + pyruvate. It participates in amino-sugar metabolism; N-acetylneuraminate degradation; D-fructose 6-phosphate from N-acetylneuraminate: step 1/5. Catalyzes the reversible aldol cleavage of N-acetylneuraminic acid (sialic acid; Neu5Ac) to form pyruvate and N-acetylmannosamine (ManNAc) via a Schiff base intermediate. This Shigella boydii serotype 4 (strain Sb227) protein is N-acetylneuraminate lyase.